The primary structure comprises 204 residues: GTP cyclohydrolase 1 (204 aa).

Zn(2+)-binding residues include cysteine 92, histidine 95, and cysteine 165.

Belongs to the GTP cyclohydrolase I family. In terms of assembly, homomer.

The enzyme catalyses GTP + H2O = 7,8-dihydroneopterin 3'-triphosphate + formate + H(+). The protein operates within cofactor biosynthesis; 7,8-dihydroneopterin triphosphate biosynthesis; 7,8-dihydroneopterin triphosphate from GTP: step 1/1. The protein is GTP cyclohydrolase 1 of Mycobacteroides abscessus (strain ATCC 19977 / DSM 44196 / CCUG 20993 / CIP 104536 / JCM 13569 / NCTC 13031 / TMC 1543 / L948) (Mycobacterium abscessus).